Consider the following 683-residue polypeptide: Multidrug resistance protein MdtO (683 aa).

Helical transmembrane passes span 43 to 63 (VILI…AVLF), 75 to 95 (FVAI…FLIY), 100 to 120 (GEPL…MFLM), 125 to 145 (LGLV…FPAM), 158 to 178 (WCIV…VLWF), 402 to 422 (FGGA…VMPW), 426 to 446 (IVEL…IATS), 457 to 477 (MVVT…YDLV), and 483 to 503 (ALGI…VWPE).

It belongs to the MdtO family. In terms of assembly, could be part of a tripartite efflux system composed of MdtN, MdtO and MdtP.

Its subcellular location is the cell inner membrane. Its function is as follows. Could be involved in resistance to puromycin, acriflavine and tetraphenylarsonium chloride. The protein is Multidrug resistance protein MdtO (mdtO) of Escherichia coli (strain K12).